A 110-amino-acid chain; its full sequence is Iron-sulfur cluster assembly protein CyaY (110 aa).

Belongs to the frataxin family.

In terms of biological role, involved in iron-sulfur (Fe-S) cluster assembly. May act as a regulator of Fe-S biogenesis. The protein is Iron-sulfur cluster assembly protein CyaY of Paracidovorax citrulli (strain AAC00-1) (Acidovorax citrulli).